The following is a 213-amino-acid chain: Nickel-cobalt-cadmium resistance protein NccN (213 aa).

4 helical membrane passes run 24–44 (IGIW…GHSQ), 48–68 (TWIS…ATVG), 113–133 (ESIT…PAVI), and 180–200 (NLAD…VELA).

It to A.eutrophus CzcN.

The protein resides in the cell inner membrane. In terms of biological role, component of the NCC cation-efflux system that confers resistance to nickel, cobalt and cadmium. Appears to be involved in metal specificity but affects only nickel resistance. May be involved in nickel transport. This is Nickel-cobalt-cadmium resistance protein NccN (nccN) from Alcaligenes xylosoxydans xylosoxydans (Achromobacter xylosoxidans).